Consider the following 94-residue polypeptide: Large ribosomal subunit protein uL23 (94 aa).

It belongs to the universal ribosomal protein uL23 family. As to quaternary structure, part of the 50S ribosomal subunit. Contacts protein L29, and trigger factor when it is bound to the ribosome.

One of the early assembly proteins it binds 23S rRNA. One of the proteins that surrounds the polypeptide exit tunnel on the outside of the ribosome. Forms the main docking site for trigger factor binding to the ribosome. In Geobacter metallireducens (strain ATCC 53774 / DSM 7210 / GS-15), this protein is Large ribosomal subunit protein uL23.